Consider the following 305-residue polypeptide: uncharacterized protein (305 aa).

An N-terminal signal peptide occupies residues 1–29; that stretch reads MSKAVSEILGYMYIFGIVMAVLAIVFVQV.

This is an uncharacterized protein from Archaeoglobus fulgidus (strain ATCC 49558 / DSM 4304 / JCM 9628 / NBRC 100126 / VC-16).